A 30-amino-acid polypeptide reads, in one-letter code: Pyrrole-2-carboxylate oxygenase (30 aa).

In terms of assembly, homotrimer. FAD serves as cofactor.

The catalysed reaction is pyrrole-2-carboxylate + NADH + O2 + H(+) = 5-hydroxypyrrole-2-carboxylate + NAD(+) + H2O. Functionally, monooxygenase that initiates the degradation of pyrrole-2-carboxylate, which allows Arthrobacter sp. strain Py1 to grow on pyrrole-2-carboxylate as sole carbon, nitrogen, and energy source. To a lesser extent, can also use pyrrole, pyrrole-2-aldehyde, and indole-2-carboxylate as substrate. In Arthrobacter sp. (strain Py1), this protein is Pyrrole-2-carboxylate oxygenase.